The chain runs to 63 residues: Large ribosomal subunit protein bL35 (63 aa).

The span at 1 to 43 shows a compositional bias: basic residues; the sequence is MKMRTHSGAKKRLKVLSSGKVKKKSTRMRHLNSHMSSKTKRQL. Residues 1 to 45 are disordered; sequence MKMRTHSGAKKRLKVLSSGKVKKKSTRMRHLNSHMSSKTKRQLGK.

The protein belongs to the bacterial ribosomal protein bL35 family.

This chain is Large ribosomal subunit protein bL35, found in Bdellovibrio bacteriovorus (strain ATCC 15356 / DSM 50701 / NCIMB 9529 / HD100).